The following is a 610-amino-acid chain: Myoneurin (610 aa).

The BTB domain occupies 24 to 89; sequence CDCTVVIGEF…IYTGTLNLDS (66 aa). The tract at residues 156–199 is disordered; it reads SEVSTDSVQANPKPRALTKKSSQSKKKKKAFSSQKPGQSKAVQY. Residues 171–185 show a composition bias toward basic residues; that stretch reads ALTKKSSQSKKKKKA. 2 consecutive short sequence motifs (nuclear localization signal) follow at residues 174-190 and 257-262; these read KKSSQSKKKKKAFSSQK and KRKRRK. 8 consecutive C2H2-type zinc fingers follow at residues 302–324, 330–352, 358–381, 387–409, 415–437, 443–465, 471–493, and 499–522; these read PMCNTCGKVFSEASSLRRHMRIH, YVCHLCGKAFTQCNQLKTHVRTH, YKCELCDKGFAQKCQLVFHSRMHH, YKCDVCNLQFATSSNLKIHARKH, YVCDRCGQRFAQASTLTYHVRRH, YVCDTCGKAFAVSSSLITHSRKH, YICGICGKSFISSGELNKHFRSH, and FICELCGNSYTDIKNLKKHKTKVH. Positions 519-548 are disordered; the sequence is TKVHSGTDKNPDCSVDDHAVSEQDSVQRSP. The segment covering 523-539 has biased composition (basic and acidic residues); the sequence is SGTDKNPDCSVDDHAVS.

Belongs to the krueppel C2H2-type zinc-finger protein family. In terms of tissue distribution, mainly expressed in the neuromuscular system. Located in and around synaptic myonuclei in adult muscle. Expression is dysregulated after nerve injury. Also found in the cerebellum, testis, heart, brain and liver.

It is found in the nucleus. The chain is Myoneurin (Mynn) from Mus musculus (Mouse).